A 497-amino-acid chain; its full sequence is Carboxypeptidase Y homolog ARB_02032 (497 aa).

Residues 1 to 18 form the signal peptide; that stretch reads MRFTQIVAAALCLGATEA. N-linked (GlcNAc...) asparagine glycosylation is present at Asn88. Ser204 is an active-site residue. Residues Asn263 and Asn393 are each glycosylated (N-linked (GlcNAc...) asparagine). The active site involves Asp403. Residue Asn417 is glycosylated (N-linked (GlcNAc...) asparagine). The active site involves His469.

This sequence belongs to the peptidase S10 family.

The protein localises to the secreted. It catalyses the reaction Release of a C-terminal amino acid with broad specificity.. Involved in degradation of small peptides. The polypeptide is Carboxypeptidase Y homolog ARB_02032 (Arthroderma benhamiae (strain ATCC MYA-4681 / CBS 112371) (Trichophyton mentagrophytes)).